A 341-amino-acid chain; its full sequence is Zinc finger protein ZIC 4 (341 aa).

Positions 36–66 are disordered; that stretch reads HHGPQLAASSNPSVLPGLHEQPPQASHSRPL. The segment at 135 to 169 adopts a C2H2-type 1; atypical zinc-finger fold; the sequence is LICKWLGDDSPMSPRPCSKTFSTMHELVTHVTVEH. A C2H2-type 2; atypical zinc finger spans residues 178–205; the sequence is HICFWEECPRQGKPFKAKYKLVNHIRVH. 3 C2H2-type zinc fingers span residues 211–235, 241–265, and 271–295; these read FPCP…KRTH, FRCE…SHVH, and YMCK…MKVH. The interval 289–309 is disordered; the sequence is RKHMKVHGRSPPPSSGYDSAI.

The protein belongs to the GLI C2H2-type zinc-finger protein family. In terms of tissue distribution, exclusively expressed in the cerebellum.

The protein resides in the nucleus. Functionally, binds to DNA. The chain is Zinc finger protein ZIC 4 (Zic4) from Mus musculus (Mouse).